A 393-amino-acid polypeptide reads, in one-letter code: Bifunctional enzyme Fae/Hps (393 aa).

Residues 1-161 (MYLVGEALIG…YEKDRAAHGI (161 aa)) are formaldehyde-activating enzyme. The active-site Proton donor is His-17. Asp-19, Leu-48, Lys-66, Thr-68, and Gln-83 together coordinate substrate. Positions 162-393 (MGFKVQRLWD…IDQFRIMTDF (232 aa)) are 3-hexulose-6-phosphate synthase.

This sequence in the N-terminal section; belongs to the formaldehyde-activating enzyme family. In the C-terminal section; belongs to the HPS/KGPDC family. HPS subfamily.

It catalyses the reaction 5,6,7,8-tetrahydromethanopterin + formaldehyde = 5,10-methylenetetrahydromethanopterin + H2O. The catalysed reaction is D-ribulose 5-phosphate + formaldehyde = D-arabino-hex-3-ulose 6-phosphate. It functions in the pathway carbohydrate biosynthesis; D-ribose 5-phosphate biosynthesis. Catalyzes the condensation of formaldehyde with tetrahydromethanopterin (H(4)MPT) to 5,10-methylenetetrahydromethanopterin. Its function is as follows. Catalyzes the reversible formation of ribulose-5-phosphate and formaldehyde from 3-hexulose-6-phosphate. This Methanoregula boonei (strain DSM 21154 / JCM 14090 / 6A8) protein is Bifunctional enzyme Fae/Hps.